Here is a 246-residue protein sequence, read N- to C-terminus: NLP effector protein Pc118548 (246 aa).

The signal sequence occupies residues 1 to 19 (MNFRAFLLAAIAGIATINA). Residues 122-128 (GHRHYWE) carry the Hepta-peptide GHRHDWE motif motif. Asn141 is a glycosylation site (N-linked (GlcNAc...) asparagine).

Belongs to the Necrosis inducing protein (NPP1) family.

It localises to the secreted. In terms of biological role, secreted effector that contributes strongly to virulence during infection by P.capsici. Induces cell death in the Solanaceae, including Nicotiana benthamiana and hot pepper. This Phytophthora capsici protein is NLP effector protein Pc118548.